A 567-amino-acid chain; its full sequence is Arginine--tRNA ligase (567 aa).

A 'HIGH' region motif is present at residues 121 to 131 (ANPNGPLHVGH).

Belongs to the class-I aminoacyl-tRNA synthetase family.

It is found in the cytoplasm. It carries out the reaction tRNA(Arg) + L-arginine + ATP = L-arginyl-tRNA(Arg) + AMP + diphosphate. This is Arginine--tRNA ligase from Methanosarcina acetivorans (strain ATCC 35395 / DSM 2834 / JCM 12185 / C2A).